A 1140-amino-acid polypeptide reads, in one-letter code: DNA damage-binding protein 1 (1140 aa).

It belongs to the DDB1 family. Component of the UV-DDB complex which includes DDB1 and DDB2; the heterodimer dimerizes to give rise to a heterotetramer when bound to damaged DNA. The UV-DDB complex interacts with monoubiquitinated histone H2A and binds to XPC via the DDB2 subunit. Component of numerous DCX (DDB1-CUL4-X-box) E3 ubiquitin-protein ligase complexes which consist of a core of DDB1, CUL4A or CUL4B and RBX1. DDB1 may recruit specific substrate targeting subunits to the DCX complex. These substrate targeting subunits are generally known as DCAF (DDB1- and CUL4-associated factor) or CDW (CUL4-DDB1-associated WD40-repeat) proteins. Interacts with Fbw5 and gig. May interact with ohgt.

The protein resides in the cytoplasm. The protein localises to the nucleus. Its pathway is protein modification; protein ubiquitination. In terms of biological role, protein, which is both involved in DNA repair and protein ubiquitination, as part of the UV-DDB complex and DCX (DDB1-CUL4-X-box) complexes, respectively. Core component of the UV-DDB complex (UV-damaged DNA-binding protein complex), a complex that recognizes UV-induced DNA damage and recruit proteins of the nucleotide excision repair pathway (the NER pathway) to initiate DNA repair. The UV-DDB complex preferentially binds to cyclobutane pyrimidine dimers (CPD), 6-4 photoproducts (6-4 PP), apurinic sites and short mismatches. Also functions as a component of numerous distinct DCX (DDB1-CUL4-X-box) E3 ubiquitin-protein ligase complexes which mediate the ubiquitination and subsequent proteasomal degradation of target proteins. The functional specificity of the DCX E3 ubiquitin-protein ligase complex is determined by the variable substrate recognition component recruited by DDB1. Required for degradation of gig. Required for genomic stability in the face of endogenous DNA lesions and for the response to MMS-induced DNA damage. Required for normal wing development. This chain is DNA damage-binding protein 1 (pic), found in Drosophila melanogaster (Fruit fly).